The sequence spans 253 residues: MPEPTQKPAKEPVRAPIKEHFQLRETIVTIAADDPAHIEAAKEAIRVHRATLETYILADPYFQFTLEPYECPENAPEVVRRMVKAGNTMGIGPMSAVAGTISALAVEAMVKAGAKYAIVDNGGDIALINDRSVVVGIYAGQSPIKNLGLIFEPRDSITGVCTSAGTVGPSISFGMADAAAIFSDDVSLADAAATALGNEVGIGKEAVEVAFKVVKTVQGIKGALVIQGEYIGMWGKVPKITRAEVRHEYITKA.

This sequence belongs to the UPF0280 family.

This Methanosarcina acetivorans (strain ATCC 35395 / DSM 2834 / JCM 12185 / C2A) protein is UPF0280 protein MA_1715.